The chain runs to 243 residues: UPF0758 protein SYNPCC7002_A0220 (243 aa).

Residues 112-235 enclose the MPN domain; the sequence is IIVDSPEAAA…FGSLRQKTAL (124 aa). 3 residues coordinate Zn(2+): His184, His186, and Asp197. Residues 184–197 carry the JAMM motif motif; sequence HNHPSGNVDPSPED.

It belongs to the UPF0758 family.

The polypeptide is UPF0758 protein SYNPCC7002_A0220 (Picosynechococcus sp. (strain ATCC 27264 / PCC 7002 / PR-6) (Agmenellum quadruplicatum)).